The sequence spans 497 residues: Serine hydroxymethyltransferase, mitochondrial (497 aa).

The transit peptide at 1-27 (MFIRRLHTSSRRLTCGEALRACQQTGA) directs the protein to the mitochondrion. N6-(pyridoxal phosphate)lysine is present on Lys272.

The protein belongs to the SHMT family. In terms of assembly, homotetramer. Requires pyridoxal 5'-phosphate as cofactor.

Its subcellular location is the mitochondrion. The catalysed reaction is (6R)-5,10-methylene-5,6,7,8-tetrahydrofolate + glycine + H2O = (6S)-5,6,7,8-tetrahydrofolate + L-serine. It functions in the pathway one-carbon metabolism; tetrahydrofolate interconversion. Its function is as follows. Interconversion of serine and glycine. The polypeptide is Serine hydroxymethyltransferase, mitochondrial (SHM1) (Eremothecium gossypii (strain ATCC 10895 / CBS 109.51 / FGSC 9923 / NRRL Y-1056) (Yeast)).